Here is a 104-residue protein sequence, read N- to C-terminus: UPF0213 protein YsiG (104 aa).

The region spanning 2–79 (NQYFTYILQC…KLVRKQKLSL (78 aa)) is the GIY-YIG domain.

Belongs to the UPF0213 family.

This is UPF0213 protein YsiG (ysiG) from Lactococcus lactis subsp. lactis (strain IL1403) (Streptococcus lactis).